Here is a 179-residue protein sequence, read N- to C-terminus: Proteasome chaperone 3 (179 aa).

It belongs to the PSMG3 family. In terms of assembly, component of the 20S proteasome chaperone. Forms a heterodimer with POC4 that binds to proteasome precursors. Interacts with POP2.

Involved in 20S proteasome assembly, facilitating the alpha-ring formation. The protein is Proteasome chaperone 3 (IRC25) of Saccharomyces cerevisiae (strain ATCC 204508 / S288c) (Baker's yeast).